The primary structure comprises 398 residues: Spermatogenesis associated 6-like protein (398 aa).

Residues 170-215 (KLNGPANNRKKKPKEKNSDQLSKGTPFWGPSPQRLHLHRPTQRNPG) are disordered. Phosphoserine is present on residues Ser-269 and Ser-272.

It belongs to the SPATA6 family.

The chain is Spermatogenesis associated 6-like protein (Spata6l) from Rattus norvegicus (Rat).